A 411-amino-acid polypeptide reads, in one-letter code: Indian hedgehog protein (411 aa).

The first 27 residues, 1-27 (MSPARLRPRLHFCLVLLLLLVVPAAWG), serve as a signal peptide directing secretion. Residue C28 is the site of N-palmitoyl cysteine attachment. Residues E94, E95, D100, T130, E131, D134, and D136 each coordinate Ca(2+). H145, D152, and H187 together coordinate Zn(2+). G202 is lipidated: Cholesterol glycine ester. An N-linked (GlcNAc...) asparagine glycan is attached at N282.

It belongs to the hedgehog family. As to quaternary structure, multimer. Interacts with BOC and CDON. Interacts with PTCH1. Interacts with glypican GPC3. Post-translationally, cholesterylation is required for N-product targeting to lipid rafts and multimerization. The C-terminal domain displays an autoproteolysis activity and a cholesterol transferase activity. Both activities result in the cleavage of the full-length protein and covalent attachment of a cholesterol moiety to the C-terminal of the newly generated N-product. The N-product is the active species in both local and long-range signaling, whereas the C-product is degraded in the endoplasmic reticulum. In terms of processing, N-palmitoylation by HHAT of N-product is required for indian hedgehog protein N-product multimerization and full activity. In terms of tissue distribution, expressed in embryonic lung, and in adult kidney and liver.

It is found in the cell membrane. The protein localises to the endoplasmic reticulum membrane. It localises to the golgi apparatus membrane. The protein resides in the secreted. It catalyses the reaction glycyl-L-cysteinyl-[protein] + cholesterol + H(+) = [protein]-C-terminal glycyl cholesterol ester + N-terminal L-cysteinyl-[protein]. Its function is as follows. Plays a role in embryonic morphogenesis; it is involved in the regulation of endochondral skeleton formation, and the development of retinal pigment epithelium (RPE), photoreceptors and periocular tissues. The C-terminal part of the indian hedgehog protein precursor displays an autoproteolysis and a cholesterol transferase activity. Both activities result in the cleavage of the full-length protein into two parts followed by the covalent attachment of a cholesterol moiety to the C-terminal of the newly generated N-product. Both activities occur in the endoplasmic reticulum. Plays a role in hedgehog paracrine signaling. Associated with the very-low-density lipoprotein (VLDL) particles to function as a circulating morphogen for endothelial cell integrity maintenance. In terms of biological role, the dually lipidated indian hedgehog protein N-product is a morphogen which is essential for a variety of patterning events during development. Binds to the patched (PTCH1) receptor, which functions in association with smoothened (SMO), to activate the transcription of target genes. Plays a role in morphogenesis of the skeleton by coordinating growth and differentiation of the endochondral skeleton. Positively regulates PTHLH expression during endochondral bone formation preventing chondrocyte hypertrophy. In contrast, participates in normal chondrocyte proliferation in a PTHLH-independent pathway. The chain is Indian hedgehog protein from Homo sapiens (Human).